A 541-amino-acid polypeptide reads, in one-letter code: Chaperonin GroEL 2 (541 aa).

ATP contacts are provided by residues 29 to 32 (TLGP), 86 to 90 (DGTTT), Gly-413, and Asp-492.

It belongs to the chaperonin (HSP60) family. In terms of assembly, forms a cylinder of 14 subunits composed of two heptameric rings stacked back-to-back. Interacts with the co-chaperonin GroES.

Its subcellular location is the cytoplasm. The enzyme catalyses ATP + H2O + a folded polypeptide = ADP + phosphate + an unfolded polypeptide.. Its function is as follows. Together with its co-chaperonin GroES, plays an essential role in assisting protein folding. The GroEL-GroES system forms a nano-cage that allows encapsulation of the non-native substrate proteins and provides a physical environment optimized to promote and accelerate protein folding. The polypeptide is Chaperonin GroEL 2 (Acidothermus cellulolyticus (strain ATCC 43068 / DSM 8971 / 11B)).